The sequence spans 759 residues: ARF GTPase-activating protein GIT2 (759 aa).

The Arf-GAP domain occupies 1-124; the sequence is MSKRLRSNDV…AFVHRLPCRD (124 aa). A C4-type zinc finger spans residues 11–34; it reads CADCSGPDPSWASVNRGTLICDEC. ANK repeat units follow at residues 132–161, 166–198, and 199–228; these read DLSK…QANF, KGST…THDS, and SGKT…ELTD. Disordered regions lie at residues 376-422 and 469-641; these read VSNQ…DLSD and QSEN…PSTE. Residues 385–402 are compositionally biased toward acidic residues; it reads QDNDQPDYDSVASDEDTD. Residues 451 to 478 are a coiled coil; the sequence is NNNLSGELRIMQKKLQTLQSENSSLRRQ. Residues 469-489 show a composition bias toward polar residues; sequence QSENSSLRRQATASACQVQTA. Over residues 555 to 569 the composition is skewed to low complexity; that stretch reads TSSSSLPSFPSTLSW. A compositionally biased stretch (basic and acidic residues) spans 570-583; the sequence is SRDESTRRASRLEK.

May form heterooligomers with GIT1. Directly interacts with protein Piccolo/PCLO. Interacts with PPFIA1 and PPFIA2. Interacts with ARHGEF7. Identified in a complex with ARHGEF6 and BIN2. Interacts with PAK3. Interacts with PXN/paxillin. Interacts with TGFB1I1. Forms a complex with EFNB1 and GRB4/NCK2.

Its function is as follows. GTPase-activating protein for ADP ribosylation factor family members, including ARF1. The polypeptide is ARF GTPase-activating protein GIT2 (Git2) (Rattus norvegicus (Rat)).